The following is a 541-amino-acid chain: uncharacterized protein (541 aa).

A signal peptide (tat-type signal) is located at residues 1–55 (MTKTVTRAGGASGPQQFQSGGETMKYEITRRRFLAASSAVLAAPAIVTMVRPARA). The tract at residues 339–362 (RRSPSGISSPRSNRQPKAEALSAR) is disordered. Residues 341–351 (SPSGISSPRSN) show a composition bias toward low complexity. 4 helical membrane-spanning segments follow: residues 379–399 (AIVW…MVFM), 420–440 (LPVL…AHSG), 466–486 (LVSA…GEIA), and 500–520 (VGYF…LAVA).

Belongs to the bacterial solute-binding protein 7 family. Predicted to be exported by the Tat system. The position of the signal peptide cleavage has not been experimentally proven.

It localises to the cell membrane. This is an uncharacterized protein from Sinorhizobium fredii (strain NBRC 101917 / NGR234).